The chain runs to 271 residues: N-acetyltransferase ECO1 (271 aa).

Residues 26 to 50 form a CCHH-type zinc finger; the sequence is VKCPKCSITYSTNSPSDLVQHKRYH. The N-acetyltransferase domain maps to 109 to 271; the sequence is VMISPKKANE…SGKLLIPCYI (163 aa).

Belongs to the acetyltransferase family. ECO subfamily.

It is found in the nucleus. In terms of biological role, probable acetyltransferase required for the establishment of sister chromatid cohesion and couple the processes of cohesion and DNA replication to ensure that only sister chromatids become paired together. In contrast to the structural cohesins, the deposition and establishment factors are required only during S phase. Acts by acetylating the cohesin complex component SMC3. This Kluyveromyces lactis (strain ATCC 8585 / CBS 2359 / DSM 70799 / NBRC 1267 / NRRL Y-1140 / WM37) (Yeast) protein is N-acetyltransferase ECO1 (ECO1).